The following is a 463-amino-acid chain: Asparagine--tRNA ligase (463 aa).

The protein belongs to the class-II aminoacyl-tRNA synthetase family. Homodimer.

Its subcellular location is the cytoplasm. It carries out the reaction tRNA(Asn) + L-asparagine + ATP = L-asparaginyl-tRNA(Asn) + AMP + diphosphate + H(+). This Desulfitobacterium hafniense (strain Y51) protein is Asparagine--tRNA ligase.